A 1125-amino-acid chain; its full sequence is tRNA (34-2'-O)-methyltransferase regulator WDR6 (1125 aa).

An N-acetylmethionine modification is found at methionine 1. WD repeat units follow at residues 89–130 (SKGL…GNVA), 155–197 (TDRC…PDNK), 207–246 (GHVG…VPGG), 256–294 (GHSA…QAFR), 295–335 (GHQG…YPGL), 346–384 (SRPG…WEQL), 433–475 (LFQG…TGKA), 489–528 (SKQR…FKKP), 567–605 (HGKQ…QPVL), 611–650 (RGMN…KLHI), 652–692 (NCGG…IRPN), 725–765 (EHPD…GAAH), 767–798 (LTAV…HPGL), 860–905 (TRYM…RILH), 912–958 (HHKR…DRGS), 982–1024 (AHSC…PELE), and 1047–1085 (AHAA…PTFM).

This sequence belongs to the WD repeat WDR6 family. In terms of assembly, interacts with FTSJ1; the interaction is direct, and required for 2'-O-methylation of position 34 in substrate tRNAs. Interacts with IRS4. Interacts with STK11/LKB1. Expressed in hypothalamus, hippocampus, cerebrum cortex and cerebellum.

The protein resides in the cytoplasm. Together with methyltransferase FTSJ1, methylates the 2'-O-ribose of nucleotides at position 34 of the tRNA anticodon loop of substrate tRNAs. Required for the correct positioning of the substrate tRNA for methylation. Required to suppress amino acid starvation-induced autophagy. Enhances the STK11/LKB1-induced cell growth suppression activity. The protein is tRNA (34-2'-O)-methyltransferase regulator WDR6 (Wdr6) of Rattus norvegicus (Rat).